A 153-amino-acid polypeptide reads, in one-letter code: MSLDLALDVQYATTSDYLPSEEQLALWVKTAIGNSMKQAELTIRIVDARESQMLNGTYRGKDKPTNVLSFPFEAPPEIELPLLGDLVICASVVENEAREQDKTLEAHWAHMVVHGCLHLLGYDHIEDEEAEEMESLETQLIESLGFTDPYKEQ.

3 residues coordinate Zn(2+): H114, H118, and H124.

Belongs to the endoribonuclease YbeY family. Requires Zn(2+) as cofactor.

It is found in the cytoplasm. Single strand-specific metallo-endoribonuclease involved in late-stage 70S ribosome quality control and in maturation of the 3' terminus of the 16S rRNA. The chain is Endoribonuclease YbeY from Shewanella oneidensis (strain ATCC 700550 / JCM 31522 / CIP 106686 / LMG 19005 / NCIMB 14063 / MR-1).